The primary structure comprises 288 residues: Undecaprenyl-diphosphatase (288 aa).

A run of 8 helical transmembrane segments spans residues 11 to 31, 49 to 69, 94 to 114, 129 to 149, 159 to 179, 199 to 219, 234 to 254, and 265 to 285; these read LDLW…FLPI, PGVA…LSYF, AQMG…GLLI, LAAI…AEQL, LRLA…IPGV, AARF…LVEL, VLAI…AWLL, and FVVY…TGTL.

The protein belongs to the UppP family.

It is found in the cell inner membrane. It catalyses the reaction di-trans,octa-cis-undecaprenyl diphosphate + H2O = di-trans,octa-cis-undecaprenyl phosphate + phosphate + H(+). Functionally, catalyzes the dephosphorylation of undecaprenyl diphosphate (UPP). Confers resistance to bacitracin. The sequence is that of Undecaprenyl-diphosphatase from Synechococcus elongatus (strain ATCC 33912 / PCC 7942 / FACHB-805) (Anacystis nidulans R2).